A 151-amino-acid polypeptide reads, in one-letter code: Proteolipid protein 2 (151 aa).

Positions 19 to 137 (FSRTKKGILL…DAYITFPLKQ (119 aa)) constitute an MARVEL domain. 4 helical membrane passes run 25–45 (GILL…FSAS), 48–68 (AYSS…VFYM), 85–105 (FFRS…VLVE), and 112–132 (IVAG…AYIT).

It is found in the membrane. Its function is as follows. May play a role in cell differentiation in the intestinal epithelium. In Rattus norvegicus (Rat), this protein is Proteolipid protein 2 (Plp2).